Reading from the N-terminus, the 373-residue chain is Pectin lyase D (373 aa).

An N-terminal signal peptide occupies residues 1-19; sequence MKYAAALTAIAALAARAAA. Intrachain disulfides connect Cys-82–Cys-101 and Cys-91–Cys-225. N-linked (GlcNAc...) asparagine glycosylation occurs at Asn-128. Arg-255 is an active-site residue. Residue Asn-274 is glycosylated (N-linked (GlcNAc...) asparagine). An intrachain disulfide couples Cys-321 to Cys-329. Asn-348 carries N-linked (GlcNAc...) asparagine glycosylation. The segment covering 354-366 has biased composition (low complexity); sequence LPSADAASTSPAS. Residues 354-373 form a disordered region; it reads LPSADAASTSPASNAGQGNL.

The protein belongs to the polysaccharide lyase 1 family. Post-translationally, may be O-glycosylated; does not contain N-acetylglucosamine.

The protein resides in the secreted. It carries out the reaction Eliminative cleavage of (1-&gt;4)-alpha-D-galacturonan methyl ester to give oligosaccharides with 4-deoxy-6-O-methyl-alpha-D-galact-4-enuronosyl groups at their non-reducing ends.. Functionally, pectinolytic enzymes consist of four classes of enzymes: pectin lyase, polygalacturonase, pectin methylesterase and rhamnogalacturonase. Among pectinolytic enzymes, pectin lyase is the most important in depolymerization of pectin, since it cleaves internal glycosidic bonds of highly methylated pectins. The chain is Pectin lyase D (pelD) from Aspergillus niger.